Reading from the N-terminus, the 279-residue chain is Phosphatidylglycerol--prolipoprotein diacylglyceryl transferase (279 aa).

Transmembrane regions (helical) follow at residues 18–38, 55–75, and 89–109; these read LSVR…YFVA, IIFY…VIFQ, and IWHG…AGVI. Position 137 (arginine 137) interacts with a 1,2-diacyl-sn-glycero-3-phospho-(1'-sn-glycerol). The next 2 membrane-spanning stretches (helical) occupy residues 203–223 and 235–255; these read LGET…FIEG and IRVA…LIVY.

Belongs to the Lgt family.

The protein localises to the cell membrane. The enzyme catalyses L-cysteinyl-[prolipoprotein] + a 1,2-diacyl-sn-glycero-3-phospho-(1'-sn-glycerol) = an S-1,2-diacyl-sn-glyceryl-L-cysteinyl-[prolipoprotein] + sn-glycerol 1-phosphate + H(+). The protein operates within protein modification; lipoprotein biosynthesis (diacylglyceryl transfer). Its function is as follows. Catalyzes the transfer of the diacylglyceryl group from phosphatidylglycerol to the sulfhydryl group of the N-terminal cysteine of a prolipoprotein, the first step in the formation of mature lipoproteins. The sequence is that of Phosphatidylglycerol--prolipoprotein diacylglyceryl transferase from Staphylococcus aureus (strain USA300).